Consider the following 287-residue polypeptide: MDEIVKNIREGTHVLLPFYETLPELNLSLGKSPLPSLEYGANYFLQISRVNDLNRMPTDMLKLFTHDIMLPESDLDKVYEILKINSVKYYGRSTRADAVVADLSARNKLFKRERDAIKSNNHLTENNLYISDYKMLTFDVFRPLFDFVNEKYCIIKLPTLFGRGVIDTMRIYCSLFKNVRLLKCVSDSWLKDSAIMVASDVYKKNLDLFMSHVKSVTKSSSWKDVNTVQFSILNDPVDTEFINKFLEFSNRVYEALYYVHSLLYSSMTSDSKSIENKHQRRLVKLLL.

This sequence belongs to the orthopoxvirus mRNA-capping enzyme regulatory subunit family. As to quaternary structure, interacts with the late transcription elongation factor VLTF-4/OPG110. Interacts with the late transcription factors VLTF-1.

The protein localises to the virion. In terms of biological role, acts with RNA polymerase to initiate transcription from late gene promoters. This Monkeypox virus protein is mRNA-capping enzyme regulatory subunit OPG124 (OPG124).